We begin with the raw amino-acid sequence, 570 residues long: Urease subunit alpha (570 aa).

The Urease domain maps to 135–570 (GGLDIHIHFN…ELPLAKRYSL (436 aa)). Residues H140, H142, and K219 each coordinate Ni(2+). K219 carries the post-translational modification N6-carboxylysine. H221 lines the substrate pocket. 2 residues coordinate Ni(2+): H248 and H274. The Proton donor role is filled by H322. Position 362 (D362) interacts with Ni(2+).

Belongs to the metallo-dependent hydrolases superfamily. Urease alpha subunit family. Heterotrimer of UreA (gamma), UreB (beta) and UreC (alpha) subunits. Three heterotrimers associate to form the active enzyme. Ni cation serves as cofactor. Post-translationally, carboxylation allows a single lysine to coordinate two nickel ions.

The protein resides in the cytoplasm. The enzyme catalyses urea + 2 H2O + H(+) = hydrogencarbonate + 2 NH4(+). Its pathway is nitrogen metabolism; urea degradation; CO(2) and NH(3) from urea (urease route): step 1/1. This chain is Urease subunit alpha, found in Haloquadratum walsbyi (strain DSM 16790 / HBSQ001).